A 1012-amino-acid polypeptide reads, in one-letter code: Ubiquitin-like modifier-activating enzyme 7 (1012 aa).

A 1-1 repeat occupies 23–159; the sequence is GSPAMQRIQG…DTRGLVGQLF (137 aa). Positions 23–575 are 2 approximate repeats; sequence GSPAMQRIQG…GTWGSATVFM (553 aa). Ser266 carries the post-translational modification Phosphoserine. One copy of the 1-2 repeat lies at 423–575; that stretch reads GAGFQEKLRR…GTWGSATVFM (153 aa). 442–471 contributes to the ATP binding site; that stretch reads AIGCELLKVFALVGLGAGNSGGLTVVDMDH. Cys599 (glycyl thioester intermediate) is an active-site residue.

The protein belongs to the ubiquitin-activating E1 family. In terms of assembly, (Microbial infection) Interacts with human cytomegalovirus proteins NEC2/UL50 and UL26; these interactions inhibit ISGylation and cause proteasomal degradation of UBA7. As to quaternary structure, (Microbial infection) Interacts with rotavirus non-structural protein 5 (NSP5); this interaction promotes UBA7 proteasomal degradation. Monomer. Binds and is involved in the conjugation of G1P2/ISG15. ISGylated. Post-translationally, ubiquitinated by RNF170. As to expression, expressed in a variety of normal and tumor cell types, but is reduced in lung cancer cell lines.

It localises to the cytoplasm. The protein resides in the nucleus. The protein operates within protein modification; protein ubiquitination. In terms of biological role, E1-activating enzyme that catalyzes the covalent conjugation of the ubiquitin-like protein product of ISG15 to additional interferon stimulated proteins (ISGs) as well as other cellular proteins such as P53 in a process termed protein ISGylation. Plays an essential role in antiviral immunity together with ISG15 by restricting the replication of many viruses including rabies virus, influenza virus, sindbis virus, rotavirus or human cytomegalovirus. For example, ISG15 modification of influenza A protein NS1 disrupts the association of the NS1 with importin-alpha leading to NS1 nuclear import inhibition. ISGylation of human cytomegalovirs protein UL26 regulates its stability and inhibits its activities to suppress NF-kappa-B signaling. The sequence is that of Ubiquitin-like modifier-activating enzyme 7 from Homo sapiens (Human).